The primary structure comprises 136 residues: Transmembrane protein 203 (136 aa).

Positions 1-51 (MLFSLRELVQWLGFATFEIFVHLLALLVFSVLLALRVDGLTPGLSWWNVFV) are interaction with STING1. The next 4 membrane-spanning stretches (helical) occupy residues 14–34 (FATFEIFVHLLALLVFSVLLA), 50–72 (FVPFFAADGLSTYFTTIVSVRLF), 81–101 (VLRLFWVLTVLSLKFVFEMLL), and 112–132 (LWFGLITSPVFILLQLLMIRA). The interval 52–136 (PFFAADGLST…LLMIRACRVN (85 aa)) is required for lysosomal localization of the STING-TMEM203 complex.

As to quaternary structure, homodimer. Interacts with ATP2A2 and ITPR3. Interacts with STIM1 and STING1 (via transmembrane domain).

The protein resides in the endoplasmic reticulum membrane. Its subcellular location is the endoplasmic reticulum-Golgi intermediate compartment. It is found in the lysosome membrane. Involved in the regulation of cellular calcium homeotasis. Required for spermatogenesis. Acts as a regulator of STING-mediated inflammatory signaling in macrophages. Forms a complex with STING, promoting the activity of TBK1 kinase and the transcription factor IRF3, leading to activation of type I interferon expression. This Mus musculus (Mouse) protein is Transmembrane protein 203 (Tmem203).